We begin with the raw amino-acid sequence, 216 residues long: Refilin-B (216 aa).

The disordered stretch occupies residues 1 to 52; that stretch reads MVGRLSLQDVPELVDTKKKGDGVLDSPDSGLPPSPSPSHWGLAAATGGGGER. A phosphoserine mark is found at S6 and S26.

Belongs to the Refilin family. Interacts with FLNA and FLNB.

It is found in the cytoplasm. The protein localises to the cytoskeleton. In terms of biological role, involved in the regulation of the perinuclear actin network and nuclear shape through interaction with filamins. Plays an essential role in the formation of cartilaginous skeletal elements. The chain is Refilin-B from Rattus norvegicus (Rat).